Reading from the N-terminus, the 135-residue chain is Transcriptional activator protein (135 aa).

Positions 17-32 (KVTHRQVKKRAIRRRR) match the Nuclear localization signal motif. A zinc finger lies at 37-54 (CGCSYYLHINCFNHGFTH). Positions 77–88 (VFHNHQAPTTTI) are enriched in polar residues. The segment at 77-117 (VFHNHQAPTTTIPAEPGHHNSPGSIQSQPEEGAGDSQMFSQ) is disordered. The segment at 120–135 (DLDNLTASDWSFLKGL) is transactivation.

The protein belongs to the geminiviridae transcriptional activator protein family. As to quaternary structure, monomer. Homodimer. Homooligomer. Self-interaction correlates with nuclear localization and efficient activation of transcription. Monomers suppress local silencing by interacting with and inactivating host adenosine kinase 2 (ADK2) in the cytoplasm. Interacts with and inhibits host SNF1 kinase. Binds to ssDNA. Phosphorylated.

It localises to the host nucleus. The protein resides in the host cytoplasm. Functionally, strong activator of the late viral genes promoters. Enhances the expression of the capsid protein and nuclear shuttle protein. Acts as a suppressor of RNA-mediated gene silencing, also known as post-transcriptional gene silencing (PTGS), a mechanism of plant viral defense that limits the accumulation of viral RNAs. Suppresses the host RNA silencing by inhibiting adenosine kinase 2 (ADK2), a kinase involved in a general methylation pathway. Also suppresses the host basal defense by interacting with and inhibiting SNF1 kinase, a key regulator of cell metabolism implicated in innate antiviral defense. Determines pathogenicity. In Hewittia sublobata (Coralbush), this protein is Transcriptional activator protein.